We begin with the raw amino-acid sequence, 335 residues long: Deoxyhypusine hydroxylase (335 aa).

HEAT-like PBS-type repeat units lie at residues 71-97, 104-130, 200-233, 238-264, and 271-298; these read LKHE…VAKD, CRHE…LRDN, LRYR…GLKD, FRHE…ALSN, and VRHE…FLND. Fe cation contacts are provided by H73, E74, H106, and E107. H240, E241, H273, and E274 together coordinate Fe cation.

Belongs to the deoxyhypusine hydroxylase family. The cofactor is Fe(2+).

The protein localises to the cytoplasm. The protein resides in the nucleus. The catalysed reaction is [eIF5A protein]-deoxyhypusine + AH2 + O2 = [eIF5A protein]-hypusine + A + H2O. It functions in the pathway protein modification; eIF5A hypusination. Functionally, catalyzes the hydroxylation of the N(6)-(4-aminobutyl)-L-lysine intermediate to form hypusine, an essential post-translational modification only found in mature eIF-5A factor. The protein is Deoxyhypusine hydroxylase (lia1) of Neosartorya fischeri (strain ATCC 1020 / DSM 3700 / CBS 544.65 / FGSC A1164 / JCM 1740 / NRRL 181 / WB 181) (Aspergillus fischerianus).